We begin with the raw amino-acid sequence, 247 residues long: tRNA pseudouridine synthase A (247 aa).

Aspartate 52 functions as the Nucleophile in the catalytic mechanism. Tyrosine 110 contacts substrate.

The protein belongs to the tRNA pseudouridine synthase TruA family. In terms of assembly, homodimer.

It carries out the reaction uridine(38/39/40) in tRNA = pseudouridine(38/39/40) in tRNA. Its function is as follows. Formation of pseudouridine at positions 38, 39 and 40 in the anticodon stem and loop of transfer RNAs. This chain is tRNA pseudouridine synthase A, found in Hyphomonas neptunium (strain ATCC 15444).